A 134-amino-acid polypeptide reads, in one-letter code: Profilin (134 aa).

It belongs to the profilin family. Interacts with host Tpm1. Interacts with protein A25.

It localises to the host cytoplasm. Functionally, participates in either intracellular transport of viral proteins or intercellular spread of the virus. Cellular profilins modulate actin filament dynamics (polymerization and depolymerization) via direct binding to actin through an actin-binding domain as well as by modulation of other actin-binding proteins. In contrast to cellular homologs, the poxvirus profilins seem to bind actin only weakly. The chain is Profilin from Ectromelia virus (strain Moscow) (ECTV).